The primary structure comprises 541 residues: Chaperonin GroEL (541 aa).

ATP contacts are provided by residues 29–32, 86–90, Gly413, and Asp495; these read TLGP and DGTTT.

In terms of assembly, forms a cylinder of 14 subunits composed of two heptameric rings stacked back-to-back. Interacts with the co-chaperonin GroES.

The protein resides in the cytoplasm. It carries out the reaction ATP + H2O + a folded polypeptide = ADP + phosphate + an unfolded polypeptide.. Its function is as follows. Together with its co-chaperonin GroES, plays an essential role in assisting protein folding. The GroEL-GroES system forms a nano-cage that allows encapsulation of the non-native substrate proteins and provides a physical environment optimized to promote and accelerate protein folding. The protein is Chaperonin GroEL of Thermoanaerobacter brockii (Thermoanaerobium brockii).